Consider the following 406-residue polypeptide: Phosphopentomutase (406 aa).

Residues aspartate 10, aspartate 305, histidine 310, aspartate 346, histidine 347, and histidine 358 each contribute to the Mn(2+) site.

The protein belongs to the phosphopentomutase family. Requires Mn(2+) as cofactor.

It localises to the cytoplasm. The catalysed reaction is 2-deoxy-alpha-D-ribose 1-phosphate = 2-deoxy-D-ribose 5-phosphate. It catalyses the reaction alpha-D-ribose 1-phosphate = D-ribose 5-phosphate. Its pathway is carbohydrate degradation; 2-deoxy-D-ribose 1-phosphate degradation; D-glyceraldehyde 3-phosphate and acetaldehyde from 2-deoxy-alpha-D-ribose 1-phosphate: step 1/2. In terms of biological role, isomerase that catalyzes the conversion of deoxy-ribose 1-phosphate (dRib-1-P) and ribose 1-phosphate (Rib-1-P) to deoxy-ribose 5-phosphate (dRib-5-P) and ribose 5-phosphate (Rib-5-P), respectively. The polypeptide is Phosphopentomutase (Vibrio cholerae serotype O1 (strain ATCC 39541 / Classical Ogawa 395 / O395)).